Consider the following 184-residue polypeptide: Elongation factor P (184 aa).

This sequence belongs to the elongation factor P family.

The protein resides in the cytoplasm. It participates in protein biosynthesis; polypeptide chain elongation. Functionally, involved in peptide bond synthesis. Stimulates efficient translation and peptide-bond synthesis on native or reconstituted 70S ribosomes in vitro. Probably functions indirectly by altering the affinity of the ribosome for aminoacyl-tRNA, thus increasing their reactivity as acceptors for peptidyl transferase. The protein is Elongation factor P of Leptothrix cholodnii (strain ATCC 51168 / LMG 8142 / SP-6) (Leptothrix discophora (strain SP-6)).